The following is a 93-amino-acid chain: Aspartyl/glutamyl-tRNA(Asn/Gln) amidotransferase subunit C (93 aa).

It belongs to the GatC family. In terms of assembly, heterotrimer of A, B and C subunits.

The enzyme catalyses L-glutamyl-tRNA(Gln) + L-glutamine + ATP + H2O = L-glutaminyl-tRNA(Gln) + L-glutamate + ADP + phosphate + H(+). It carries out the reaction L-aspartyl-tRNA(Asn) + L-glutamine + ATP + H2O = L-asparaginyl-tRNA(Asn) + L-glutamate + ADP + phosphate + 2 H(+). Functionally, allows the formation of correctly charged Asn-tRNA(Asn) or Gln-tRNA(Gln) through the transamidation of misacylated Asp-tRNA(Asn) or Glu-tRNA(Gln) in organisms which lack either or both of asparaginyl-tRNA or glutaminyl-tRNA synthetases. The reaction takes place in the presence of glutamine and ATP through an activated phospho-Asp-tRNA(Asn) or phospho-Glu-tRNA(Gln). This chain is Aspartyl/glutamyl-tRNA(Asn/Gln) amidotransferase subunit C, found in Nautilia profundicola (strain ATCC BAA-1463 / DSM 18972 / AmH).